Reading from the N-terminus, the 90-residue chain is Small regulatory polypeptide of amino acid response (90 aa).

The Lumenal segment spans residues 1-18 (MGAKAPRGPKVAQWAMET). Residues 19-39 (AVIGVVVVLFVVTVAITCVLC) form a helical membrane-spanning segment. The Cytoplasmic segment spans residues 40-90 (CFSCDSRAQDPQGGPGRSFTVATFRQEASLFTGPVRHAQPVPSAQDFWTFM).

Interacts with components of the lysosomal V-ATPase complex. Interacts with ATP6V0A1. Interacts with ATP6V0A2. As to expression, highly expressed in lung, heart and skeletal muscle.

The protein resides in the late endosome membrane. It is found in the lysosome membrane. In terms of biological role, negative regulator of amino acid sensing and mTORC1, a signaling complex promoting cell growth in response to growth factors, energy levels and amino acids. Negatively regulates mTORC1 activation by inhibiting recruitment of mTORC1 to lysosomes upon stimulation with amino acids: acts by promoting the formation of a tightly bound supercomplex composed of the lysosomal V-ATPase, Ragulator and Rag GTPases, preventing recruitment of mTORC1. Acts as a regulator of muscle regeneration following injury by regulating mTORC1 activation. This Homo sapiens (Human) protein is Small regulatory polypeptide of amino acid response.